A 148-amino-acid polypeptide reads, in one-letter code: Caltractin (148 aa).

4 EF-hand domains span residues 4 to 39 (EQKQ…LGFE), 40 to 75 (PKKE…KMGE), 77 to 112 (DSRE…LGEN), and 113 to 148 (LTDE…TSLF). Ca(2+) contacts are provided by aspartate 17, aspartate 19, serine 21, threonine 23, glutamate 28, aspartate 53, aspartate 55, serine 57, threonine 59, and glutamate 64. Ca(2+)-binding residues include aspartate 126, aspartate 128, aspartate 130, glutamate 132, and glutamate 137.

This sequence belongs to the centrin family. As to expression, ubiquitous.

In terms of biological role, this calcium-binding protein is found in the basal body complexes (the functional homolog of the centrosome in animal cell). In mitotic cells it is specifically associated with the poles of the mitotic spindles at the sites of the duplicated basal body complexes. This is Caltractin from Spermatozopsis similis (Green alga).